The following is a 106-amino-acid chain: CLAVATA3/ESR (CLE)-related protein 21 (106 aa).

A signal peptide spans 1–31 (MLILSSRYAMKRDVLIIVIFTVLVLIIISRS). A glycan (N-linked (GlcNAc...) asparagine) is linked at Asn-47. Basic residues predominate over residues 72 to 82 (KVRRRSSRFRR). The disordered stretch occupies residues 72–106 (KVRRRSSRFRRKTDGDEEEEEKRSIPTGPNPLHNK). 2 positions are modified to hydroxyproline: Pro-97 and Pro-100. A glycan (O-linked (Ara...) hydroxyproline) is linked at Pro-100.

The protein belongs to the CLV3/ESR signal peptide family. The O-glycosylation (arabinosylation) of the hydroxyproline Pro-100 enhances binding affinity of the CLE21p peptide for its receptor. In terms of tissue distribution, mostly expressed in leaves and apex, and, to a lower extent, in seedlings, flowers, stems and siliques.

Its subcellular location is the secreted. The protein localises to the extracellular space. Functionally, extracellular signal peptide that regulates cell fate. Represses root apical meristem maintenance. Regulates the transition of protophloem cells from proliferation to differentiation, thus impinging on postembryonic growth capacity of the root meristem; this signaling pathway requires CRN and CLV2. The chain is CLAVATA3/ESR (CLE)-related protein 21 from Arabidopsis thaliana (Mouse-ear cress).